We begin with the raw amino-acid sequence, 435 residues long: Antho-RFamide neuropeptides type 1 (435 aa).

The N-terminal stretch at 1 to 22 is a signal peptide; the sequence is MTTVSYVTILLTVLVQVLTSDA. A propeptide spanning residues 23–193 is cleaved from the precursor; sequence KATNNKRELS…SVPGRYGREL (171 aa). Q194 carries the pyrrolidone carboxylic acid modification. Position 197 is a phenylalanine amide (F197). A propeptide spanning residues 199–201 is cleaved from the precursor; that stretch reads REL. Residue F205 is modified to Phenylalanine amide. A propeptide spanning residues 207–209 is cleaved from the precursor; it reads REA. F213 is modified (phenylalanine amide). A propeptide spanning residues 215 to 217 is cleaved from the precursor; that stretch reads REL. F221 is modified (phenylalanine amide). A propeptide spanning residues 223–225 is cleaved from the precursor; sequence REF. Position 229 is a phenylalanine amide (F229). The segment covering 230 to 371 has biased composition (basic and acidic residues); it reads GREDQGRFGR…EDIAEADQGR (142 aa). Disordered stretches follow at residues 230-374 and 386-435; these read GRED…RFGR and AKKR…AKTS. A propeptide spanning residues 231–233 is cleaved from the precursor; the sequence is RED. Phenylalanine amide is present on F237. Residues 239 to 241 constitute a propeptide that is removed on maturation; it reads RED. Residue F245 is modified to Phenylalanine amide. The propeptide occupies 247–249; the sequence is RED. F253 is subject to Phenylalanine amide. A propeptide spanning residues 255–257 is cleaved from the precursor; it reads RED. The residue at position 261 (F261) is a Phenylalanine amide. Positions 263 to 265 are excised as a propeptide; it reads RED. Position 269 is a phenylalanine amide (F269). Positions 271–273 are excised as a propeptide; it reads RED. At F277 the chain carries Phenylalanine amide. A propeptide spanning residues 279–281 is cleaved from the precursor; sequence REL. F285 bears the Phenylalanine amide mark. A propeptide spanning residues 287–289 is cleaved from the precursor; sequence REF. Position 293 is a phenylalanine amide (F293). Residues 295 to 297 constitute a propeptide that is removed on maturation; the sequence is RED. F301 is modified (phenylalanine amide). Positions 303–305 are excised as a propeptide; the sequence is RED. Position 309 is a phenylalanine amide (F309). The propeptide occupies 311–313; it reads REL. F317 is subject to Phenylalanine amide. Positions 319-321 are excised as a propeptide; the sequence is RED. Phenylalanine amide is present on F325. A propeptide spanning residues 327-329 is cleaved from the precursor; it reads RED. The residue at position 333 (F333) is a Phenylalanine amide. Residues 335-342 constitute a propeptide that is removed on maturation; that stretch reads REDLAKED. At F346 the chain carries Phenylalanine amide. A propeptide spanning residues 348–355 is cleaved from the precursor; that stretch reads REDLAKED. F359 carries the post-translational modification Phenylalanine amide. Residues 361–368 constitute a propeptide that is removed on maturation; it reads REDIAEAD. F372 bears the Phenylalanine amide mark. The propeptide occupies 374–435; that stretch reads RNAAAAAAAA…KSDDALAKTS (62 aa). Residues 398–435 show a composition bias toward basic and acidic residues; the sequence is SDPKPQTRFRDGKDMQEKRKVEKKDKIEKSDDALAKTS.

It belongs to the FARP (FMRFamide related peptide) family.

It localises to the secreted. Not known but it could act as a transmitter at neuromuscular synapses. This chain is Antho-RFamide neuropeptides type 1, found in Anthopleura elegantissima (Green aggregating anemone).